We begin with the raw amino-acid sequence, 274 residues long: Transmembrane protein 106B (274 aa).

A compositionally biased stretch (low complexity) spans 1–11 (MGKSLSHLPLH). Positions 1-20 (MGKSLSHLPLHSSKEDAYDG) are disordered. Residue glycine 2 is the site of N-myristoyl glycine attachment. At 2 to 96 (GKSLSHLPLH…QRLRPRRTKL (95 aa)) the chain is on the cytoplasmic side. Residue serine 33 is modified to Phosphoserine. The helical transmembrane segment at 97–117 (YVMASVFVCLLLSGLAVFFLF) threads the bilayer. The Lumenal segment spans residues 118–274 (PRSIDVKYIG…EYLNVLQPQQ (157 aa)). N-linked (GlcNAc...) asparagine glycans are attached at residues asparagine 145, asparagine 151, asparagine 164, and asparagine 183. An intrachain disulfide couples cysteine 214 to cysteine 253. N-linked (GlcNAc...) asparagine glycosylation occurs at asparagine 256.

Belongs to the TMEM106 family. Can form homomers. Interacts (via N-terminus) with MAP6 (via C-terminus). Interacts (via C-terminus) with the vacuolar-type ATPase subunit ATP6AP1. Interacts (via N-terminus) with AP2M1 and CLTC. Interacts with TMEM106C. As to quaternary structure, (Microbial infection) Interacts with SARS coronavirus-2/SARS-CoV-2 spike protein (via RBD domain). As to expression, expressed in the brain, including in the frontal cortex (at protein level). Expressed in lung epithelial cells.

Its subcellular location is the late endosome membrane. The protein resides in the lysosome membrane. The protein localises to the cell membrane. In terms of biological role, in neurons, involved in the transport of late endosomes/lysosomes. May be involved in dendrite morphogenesis and maintenance by regulating lysosomal trafficking. May act as a molecular brake for retrograde transport of late endosomes/lysosomes, possibly via its interaction with MAP6. In motoneurons, may mediate the axonal transport of lysosomes and axonal sorting at the initial segment. It remains unclear whether TMEM106B affects the transport of moving lysosomes in the anterograde or retrograde direction in neurites and whether it is important in the sorting of lysosomes in axons or in dendrites. In neurons, may also play a role in the regulation of lysosomal size and responsiveness to stress. Required for proper lysosomal acidification. Functionally, (Microbial infection) Plays a role in human coronavirus SARS-CoV-2 infection, but not in common cold coronaviruses HCoV-229E and HCoV-OC43 infections. Involved in ACE2-independent SARS-CoV-2 cell entry. Required for post-endocytic stage of virus entry, facilitates spike-mediated membrane fusion. Virus attachment and endocytosis can also be mediated by other cell surface receptors. The chain is Transmembrane protein 106B from Homo sapiens (Human).